The primary structure comprises 767 residues: Protein transport protein Sec23B (767 aa).

A2 is modified (N-acetylalanine). The Zn(2+) site is built by C61, C66, C85, and C88. Position 564 is an N6-acetyllysine (K564). One copy of the Gelsolin-like repeat lies at 634–720; the sequence is PEPVLLDSSS…EHGGSQARFL (87 aa).

This sequence belongs to the SEC23/SEC24 family. SEC23 subfamily. In terms of assembly, COPII is composed of at least five proteins: the Sec23/24 complex, the Sec13/31 complex and Sar1. Interacts with SAR1A. As to expression, ubiquitously expressed.

It is found in the cytoplasmic vesicle. The protein localises to the COPII-coated vesicle membrane. It localises to the endoplasmic reticulum membrane. Its subcellular location is the cytoplasm. The protein resides in the cytosol. In terms of biological role, component of the coat protein complex II (COPII) which promotes the formation of transport vesicles from the endoplasmic reticulum (ER). The coat has two main functions, the physical deformation of the endoplasmic reticulum membrane into vesicles and the selection of cargo molecules for their transport to the Golgi complex. The polypeptide is Protein transport protein Sec23B (Homo sapiens (Human)).